Consider the following 412-residue polypeptide: uncharacterized protein (412 aa).

7 tandem repeats follow at residues 112–116, 117–121, 122–126, 127–131, 132–136, 137–141, and 142–146. The 7 X 5 AA tandem repeats of G-[NS]-[IV]-R-[DS] stretch occupies residues 112 to 146; it reads GSIRSGSIRSGSIRDGSIRDGSIRSGNIRDGSVRS. The segment covering 116–126 has biased composition (low complexity); the sequence is SGSIRSGSIRD. Positions 116 to 209 are disordered; that stretch reads SGSIRSGSIR…SEKSIKPSTK (94 aa). Over residues 192–209 the composition is skewed to basic and acidic residues; that stretch reads NHYAESEYSEKSIKPSTK.

It belongs to the asfivirus B407L family.

This is an uncharacterized protein from Ornithodoros (relapsing fever ticks).